Reading from the N-terminus, the 668-residue chain is Probable metal-nicotianamine transporter YSL5 (668 aa).

The span at 1-11 shows a compositional bias: low complexity; sequence MPPPETSSAAA. Positions 1-22 are disordered; it reads MPPPETSSAAAPSPPSPDPLPP. Residues 12–22 show a composition bias toward pro residues; that stretch reads PSPPSPDPLPP. 14 helical membrane-spanning segments follow: residues 27-47, 51-71, 102-122, 147-167, 209-229, 268-288, 315-335, 383-403, 410-430, 443-463, 501-521, 557-577, 595-615, and 633-653; these read LTLRGVAVAAVLGSLLCVVIH, LTVGVIPALNVASGLLAFFLA, CAIACGSLAFSGCSSSYIFAM, LGWMIGFMFLIALIGPFSIVM, LVKYMSLSFGWSFFKWFFSGV, IVNCSVFLGSVISWGFLWPFI, IAISVILGDGLYNLVKVFLII, LAVSGYIVLAAISTVAVPIIF, LVLVCYFLAPAIAFCNSYGMG, IALFVFASLVGSDGGVIAGLA, IGVALGCIIAPLTLWLFWTAF, LEICCVFFLAALIINLMKDVV, FYIGAYFGVDMFIGTLILFAW, and GLICGDGVWSIPSAVLSILGV.

The protein belongs to the YSL (TC 2.A.67.2) family. In terms of tissue distribution, expressed in roots.

The protein resides in the membrane. Its function is as follows. May be involved in the transport of nicotianamine-chelated metals. The sequence is that of Probable metal-nicotianamine transporter YSL5 (YSL5) from Oryza sativa subsp. japonica (Rice).